The primary structure comprises 196 residues: uncharacterized protein (196 aa).

A helical transmembrane segment spans residues 20–40 (GALALGCIALLLMGIVGCTTV).

Its subcellular location is the membrane. This is an uncharacterized protein from Mycobacterium tuberculosis (strain CDC 1551 / Oshkosh).